A 202-amino-acid polypeptide reads, in one-letter code: Na(+)-translocating NADH-quinone reductase subunit E (202 aa).

6 consecutive transmembrane segments (helical) span residues 11–31 (AVFI…FLAV), 35–55 (VTTS…SVPV), 81–101 (FLRF…LEMA), 114–134 (GIFL…SFMV), 144–164 (VVYG…LAGI), and 180–200 (LGIT…FSGI).

Belongs to the NqrDE/RnfAE family. In terms of assembly, composed of six subunits; NqrA, NqrB, NqrC, NqrD, NqrE and NqrF.

Its subcellular location is the cell inner membrane. It carries out the reaction a ubiquinone + n Na(+)(in) + NADH + H(+) = a ubiquinol + n Na(+)(out) + NAD(+). In terms of biological role, NQR complex catalyzes the reduction of ubiquinone-1 to ubiquinol by two successive reactions, coupled with the transport of Na(+) ions from the cytoplasm to the periplasm. NqrA to NqrE are probably involved in the second step, the conversion of ubisemiquinone to ubiquinol. This chain is Na(+)-translocating NADH-quinone reductase subunit E, found in Pseudoalteromonas translucida (strain TAC 125).